Consider the following 527-residue polypeptide: Aspartokinase (527 aa).

Thr-333 bears the Phosphothreonine mark. One can recognise an ACT domain in the interval 442-527; the sequence is LVGKHMKQYI…RLEQLKRLGI (86 aa).

It belongs to the aspartokinase family. In terms of assembly, homohexamer. Interacts with FPR1; the interaction is direct, plays a role in feedback inhibition of aspartokinase by threonine, and inhibited by tacrolimus and sirolimus.

It carries out the reaction L-aspartate + ATP = 4-phospho-L-aspartate + ADP. Its pathway is amino-acid biosynthesis; L-methionine biosynthesis via de novo pathway; L-homoserine from L-aspartate: step 1/3. It participates in amino-acid biosynthesis; L-threonine biosynthesis; L-threonine from L-aspartate: step 1/5. With respect to regulation, allosterically inhibited by threonine. Functionally, phosphorylates aspartate, the first step in the biosynthesis of amino acids that derive from aspartate (the aspartate family of amino acids), including methioinine and threonine, the latter of which is a precursor to isoleucine. The sequence is that of Aspartokinase (HOM3) from Saccharomyces cerevisiae (strain ATCC 204508 / S288c) (Baker's yeast).